We begin with the raw amino-acid sequence, 1096 residues long: DNA-directed RNA polymerase subunit beta (1096 aa).

Residues 1070-1096 (LMQDVNPRRSTPSRPTYESLGSDYQED) are disordered.

Belongs to the RNA polymerase beta chain family. In terms of assembly, in cyanobacteria the RNAP catalytic core is composed of 2 alpha, 1 beta, 1 beta', 1 gamma and 1 omega subunit. When a sigma factor is associated with the core the holoenzyme is formed, which can initiate transcription.

The enzyme catalyses RNA(n) + a ribonucleoside 5'-triphosphate = RNA(n+1) + diphosphate. In terms of biological role, DNA-dependent RNA polymerase catalyzes the transcription of DNA into RNA using the four ribonucleoside triphosphates as substrates. In Prochlorococcus marinus (strain MIT 9211), this protein is DNA-directed RNA polymerase subunit beta.